Reading from the N-terminus, the 225-residue chain is Large ribosomal subunit protein eL15 (225 aa).

Residues arginine 159 to leucine 180 form a disordered region. Positions lysine 169–leucine 180 are enriched in basic residues.

This sequence belongs to the eukaryotic ribosomal protein eL15 family.

The polypeptide is Large ribosomal subunit protein eL15 (rpl15e) (Aeropyrum pernix (strain ATCC 700893 / DSM 11879 / JCM 9820 / NBRC 100138 / K1)).